Consider the following 315-residue polypeptide: Cobalamin biosynthesis protein CobD (315 aa).

A run of 5 helical transmembrane segments spans residues 54–74, 78–98, 152–172, 203–223, and 295–315; these read GLLF…ILFL, IAYW…LAMT, ADGV…LALM, IANF…SFIL, and LLYT…LLLF.

It belongs to the CobD/CbiB family.

The protein localises to the cell membrane. It participates in cofactor biosynthesis; adenosylcobalamin biosynthesis. Functionally, converts cobyric acid to cobinamide by the addition of aminopropanol on the F carboxylic group. The chain is Cobalamin biosynthesis protein CobD from Listeria monocytogenes serotype 4b (strain F2365).